The primary structure comprises 1806 residues: Focadhesin (1806 aa).

A disordered region spans residues 733 to 760; sequence ARPIPKQPEVEDEVKQNEEENEEEEDIS.

It localises to the cell junction. It is found in the focal adhesion. The protein localises to the cytoplasm. Its subcellular location is the cytosol. In terms of biological role, required for the maintenance of SKIC2 and SKIC3 proteostatic levels in the liver. May be involved in the regulation of RNA degradation by the exosome complex. In Danio rerio (Zebrafish), this protein is Focadhesin (focad).